Reading from the N-terminus, the 94-residue chain is Putative regulatory protein LEPBI_I0950 (94 aa).

It belongs to the RemA family.

This chain is Putative regulatory protein LEPBI_I0950, found in Leptospira biflexa serovar Patoc (strain Patoc 1 / ATCC 23582 / Paris).